A 103-amino-acid chain; its full sequence is CLAVATA3/ESR (CLE)-related protein 16 (103 aa).

The N-terminal stretch at 1–21 (MEACSRKRRRRRAYTTSTTGY) is a signal peptide. Positions 71–103 (VSFTGQRREEENRDEVYKDDKRLVHTGPNPLHN) are disordered. A compositionally biased stretch (basic and acidic residues) spans 76–93 (QRREEENRDEVYKDDKRL). P98 carries the hydroxyproline modification. Residue P98 is glycosylated (O-linked (Ara...) hydroxyproline).

It belongs to the CLV3/ESR signal peptide family. In terms of processing, the O-glycosylation (arabinosylation) of the hydroxyproline Pro-98 enhances binding affinity of the CLE16p peptide for its receptor. Expressed in roots, stems, apex, seedlings, leaves, flowers and siliques.

It is found in the secreted. The protein localises to the extracellular space. In terms of biological role, extracellular signal peptide that regulates cell fate. Represses root apical meristem maintenance. Regulates the transition of protophloem cells from proliferation to differentiation, thus impinging on postembryonic growth capacity of the root meristem; this signaling pathway requires CRN and CLV2. In Arabidopsis thaliana (Mouse-ear cress), this protein is CLAVATA3/ESR (CLE)-related protein 16.